Reading from the N-terminus, the 627-residue chain is MSDSPIGSSQQVEPEHRTPDLMDIDPLIANLKALHEETRSDDDDDGQPSTSAKRKDSRADGIVIHQKKYSDPGRFLWIWLLGVRVPALSIDGEPHLPIEILDDMLTKKDKKDQMSFQNLLRYKNVYIRMASPSQFRAVMEKSKECENLNITSLSLMSRSDIERIMGELRLESMLTLAEHDNWDISDRVHVVHVNFIDYCSEWLESDDLEEDVMQSGTHGYWYKNRRNMRCIECQHCEGKFTPTDFIMHHHYPIKPSGFVHTGCNSFQWIRLIEVFDKSNENLEAWNKFVLNSHRAGKREYDEAAPHQAPPKRPAMETPVPVAADNGWEADEEEEGEEIVDRDADIEKCKLRNKKKMENLHIADFLGPSGSKGLKPRNKFEAVIIEQLNKMDDAALEALFLKSPEEYNLWVKESDFTHKVVTQQQEWKAKMKDPNFKSRASANFDVSKGEFDNMRHFDNASKATRQEIQQLAEQFANLDRDAKLLTPMEFVLREHALLKNVSADAIRVLCNRPPLPPLPPPPPPPKPKPAPVQPISLGNINFVALAQQLIASGIKLPLPIVTPPVVSTPAPVITPIPAALPISPNSDFLKQQLSTAMSSPALLSLYPKLTAGAYEQLAQFIKTTTVKN.

Polar residues predominate over residues Met1–Val12. 3 disordered regions span residues Met1–Met22, Leu34–Arg58, and Glu299–Pro318.

The protein belongs to the SKI family. In terms of assembly, may interact with daf-3. Expressed in ganglia in the head and tail and in the anterior pharynx.

The protein localises to the nucleus. Its function is as follows. Probable component of transcriptional regulatory complex with SMAD protein daf-3. Required to regulate entry into a developmentally arrested larval state known as dauer, in response to harsh environmental conditions. Involved in larvae undergoing cell-cycle arrest during the dauer stage. This chain is Ski protein homolog, found in Caenorhabditis elegans.